Here is a 568-residue protein sequence, read N- to C-terminus: DNA mismatch repair protein MutL (568 aa).

Belongs to the DNA mismatch repair MutL/HexB family.

Its function is as follows. This protein is involved in the repair of mismatches in DNA. It is required for dam-dependent methyl-directed DNA mismatch repair. May act as a 'molecular matchmaker', a protein that promotes the formation of a stable complex between two or more DNA-binding proteins in an ATP-dependent manner without itself being part of a final effector complex. This chain is DNA mismatch repair protein MutL, found in Thermosipho africanus (strain TCF52B).